A 475-amino-acid chain; its full sequence is D(1B) dopamine receptor (475 aa).

Topologically, residues 1–38 are extracellular; it reads MLPPGRNRTAQPARLGLQRQLAQVDAPAGSATPLGPAQ. N7 is a glycosylation site (N-linked (GlcNAc...) asparagine). A helical membrane pass occupies residues 39–64; the sequence is VVTAGLLTLLIVWTLLGNVLVCAAIV. The Cytoplasmic segment spans residues 65-75; it reads RSRHLRAKMTN. The chain crosses the membrane as a helical span at residues 76–102; that stretch reads IFIVSLAVSDLFVALLVMPWKAVAEVA. The Extracellular segment spans residues 103–111; sequence GYWPFGTFC. C111 and C211 are joined by a disulfide. Residues 112–134 form a helical membrane-spanning segment; it reads DIWVAFDIMCSTASILNLCIISV. At 135-153 the chain is on the cytoplasmic side; that stretch reads DRYWAISRPFRYERKMTQR. Residues 154 to 179 traverse the membrane as a helical segment; that stretch reads VALVMVGLAWTLSILISFIPVQLNWH. Residues 180 to 215 lie on the Extracellular side of the membrane; the sequence is RDKAGSQGQEGLLSNGTPWEEGWELEGRTENCDSSL. A helical transmembrane segment spans residues 216 to 240; it reads NRTYAISSSLISFYIPVAIMIVTYT. The Cytoplasmic segment spans residues 241–289; it reads RIYRIAQVQIRRISSLERAAEHAQSCRSRGAYEPDPSLRASIKKETKVF. Residues 290-317 form a helical membrane-spanning segment; the sequence is KTLSMIMGVFVCCWLPFFILNCMVPFCS. The Extracellular segment spans residues 318–335; it reads SGDAEGPKTGFPCVSETT. A helical transmembrane segment spans residues 336–357; that stretch reads FDIFVWFGWANSSLNPIIYAFN. The Cytoplasmic portion of the chain corresponds to 358–475; sequence ADFRKVFAQL…LTPNCFDKTA (118 aa). C370 is lipidated: S-palmitoyl cysteine. The segment at 415–443 is disordered; it reads SGDREVGEEEEEGPFDHMSQISPTTPDGD.

The protein belongs to the G-protein coupled receptor 1 family. As to expression, brain, in the lateral mammillary nuclei, the anterior pretectal nuclei, and several layers of the hippocampus.

The protein resides in the cell membrane. In terms of biological role, dopamine receptor whose activity is mediated by G proteins which activate adenylyl cyclase. This is D(1B) dopamine receptor (Drd5) from Rattus norvegicus (Rat).